A 228-amino-acid chain; its full sequence is Large ribosomal subunit protein uL1 (228 aa).

This sequence belongs to the universal ribosomal protein uL1 family. Part of the 50S ribosomal subunit.

Functionally, binds directly to 23S rRNA. The L1 stalk is quite mobile in the ribosome, and is involved in E site tRNA release. Its function is as follows. Protein L1 is also a translational repressor protein, it controls the translation of the L11 operon by binding to its mRNA. The chain is Large ribosomal subunit protein uL1 from Clavibacter sepedonicus (Clavibacter michiganensis subsp. sepedonicus).